Here is a 179-residue protein sequence, read N- to C-terminus: Natural killer cells antigen CD94 (179 aa).

Topologically, residues 1–10 are cytoplasmic; sequence MAVSRITRWR. Residues 11–31 form a helical; Signal-anchor for type II membrane protein membrane-spanning segment; it reads LMSVIFGIKCLFLMVTLGVLL. Residues 32-179 lie on the Extracellular side of the membrane; that stretch reads INSFTIQNIQ…NRYICKKLPI (148 aa). 4 cysteine pairs are disulfide-bonded: Cys-58-Cys-70, Cys-61-Cys-72, Cys-89-Cys-174, and Cys-152-Cys-166. One can recognise a C-type lectin domain in the interval 68-175; it reads HQCNCYFISK…CENKNRYICK (108 aa). N-linked (GlcNAc...) asparagine glycosylation is found at Asn-93 and Asn-109.

As to quaternary structure, can form disulfide-bonded heterodimer with NKG2 family members KLRC1 and KLRC2. KLRD1-KLRC1 heterodimer interacts with peptide-bound MHC-E-B2M heterotrimeric complex. KLRD1 plays a prominent role in directly interacting with MHC-E. KLRD1-KLRC1 interacts with much higher affinity with peptide-bound MHC-E-B2M than KLRD1-KLRC2. Interacts with the adapter protein TYROBP/DAP12; this interaction is required for cell surface expression and cell activation.

It is found in the cell membrane. In terms of biological role, immune receptor involved in self-nonself discrimination. In complex with KLRC1 or KLRC2 on cytotoxic and regulatory lymphocyte subsets, recognizes non-classical major histocompatibility (MHC) class Ib molecule MHC-E loaded with self-peptides derived from the signal sequence of classical MHC class Ia and non-classical MHC class Ib molecules. Enables cytotoxic cells to monitor the expression of MHC class I molecules in healthy cells and to tolerate self. Primarily functions as a ligand binding subunit as it lacks the capacity to signal. Its function is as follows. KLRD1-KLRC1 acts as an immune inhibitory receptor. Key inhibitory receptor on natural killer (NK) cells that regulates their activation and effector functions. Dominantly counteracts T cell receptor signaling on a subset of memory/effector CD8-positive T cells as part of an antigen-driven response to avoid autoimmunity. On intraepithelial CD8-positive gamma-delta regulatory T cells triggers TGFB1 secretion, which in turn limits the cytotoxic programming of intraepithelial CD8-positive alpha-beta T cells, distinguishing harmless from pathogenic antigens. In MHC-E-rich tumor microenvironment, acts as an immune inhibitory checkpoint and may contribute to progressive loss of effector functions of NK cells and tumor-specific T cells, a state known as cell exhaustion. Upon MHC-E-peptide binding, transmits intracellular signals through KLRC1 immunoreceptor tyrosine-based inhibition motifs (ITIMs) by recruiting INPP5D/SHIP-1 and INPPL1/SHIP-2 tyrosine phosphatases to ITIMs, and ultimately opposing signals transmitted by activating receptors through dephosphorylation of proximal signaling molecules. Functionally, KLRD1-KLRC2 acts as an immune activating receptor. On cytotoxic lymphocyte subsets recognizes MHC-E loaded with signal sequence-derived peptides from non-classical MHC class Ib MHC-G molecules, likely playing a role in the generation and effector functions of adaptive NK cells and in maternal-fetal tolerance during pregnancy. Regulates the effector functions of terminally differentiated cytotoxic lymphocyte subsets, and in particular may play a role in adaptive NK cell response to viral infection. Upon MHC-E-peptide binding, transmits intracellular signals via the adapter protein TYROBP/DAP12, triggering the phosphorylation of proximal signaling molecules and cell activation. In Mus musculus (Mouse), this protein is Natural killer cells antigen CD94 (Klrd1).